The chain runs to 192 residues: Probable GTP-binding protein EngB (192 aa).

Residues 22-192 (GRPEIVFVGR…LLERLDLFSQ (171 aa)) enclose the EngB-type G domain. Residues 30-37 (GRSNVGKS), 57-61 (GKTRL), 75-78 (DLPG), 142-145 (TKWD), and 172-174 (YSS) contribute to the GTP site. The Mg(2+) site is built by serine 37 and threonine 59.

The protein belongs to the TRAFAC class TrmE-Era-EngA-EngB-Septin-like GTPase superfamily. EngB GTPase family. Requires Mg(2+) as cofactor.

Its function is as follows. Necessary for normal cell division and for the maintenance of normal septation. The sequence is that of Probable GTP-binding protein EngB from Chlorobaculum parvum (strain DSM 263 / NCIMB 8327) (Chlorobium vibrioforme subsp. thiosulfatophilum).